Consider the following 160-residue polypeptide: MPSFDIVSEVAMNEVQNAVENANREIQTRFDFRGVDASFELNKEEIKMGADADFQLKQMIEILRDKIVKRGMDTSCLDVGDVEHSGKRYFQVVKLKQGIETDVAKKLIKIIKDAKIKVQTAIQGDEIRVTGKKRDDLQEAMALVRQAELGQAFQFTNFRD.

Belongs to the YajQ family.

Its function is as follows. Nucleotide-binding protein. This Tolumonas auensis (strain DSM 9187 / NBRC 110442 / TA 4) protein is Nucleotide-binding protein Tola_0795.